We begin with the raw amino-acid sequence, 809 residues long: Cell division control protein 48 homolog A (809 aa).

The residue at position 2 (serine 2) is an N-acetylserine. Serine 41 is subject to Phosphoserine. ADP contacts are provided by residues glycine 210, 248–256, and histidine 387; that span reads GPPGSGKTL. 521 to 529 contributes to the ATP binding site; the sequence is GPPGCGKTL. The tract at residues 782–809 is disordered; that stretch reads AGSGATTGVADPFATSAAAAGDDDDLYN. Positions 791–801 are enriched in low complexity; that stretch reads ADPFATSAAAA.

Belongs to the AAA ATPase family. In terms of assembly, homohexamer. Interacts with SERK1, GRF6, KAPP and SYP31, but not with KNOLLE. Component of the SERK1 signaling complex, composed of KAPP, CDC48A, GRF6 or GRF7, SERK1, SERK2, SERK3/BAK1 and BRI1. Interacts with PUX1, PUX2, PUX3, PUX4, PUX5, PUX7 and PUX11 via its N-terminus. Post-translationally, phosphorylated on at least one threonine residue and on Ser-41 by SERK1.

It localises to the nucleus. Its subcellular location is the cytoplasm. The protein localises to the cytoskeleton. The protein resides in the phragmoplast. It is found in the cell membrane. Probably functions in cell division and growth processes. Interacts with certain SNAREs as part of specialized membrane fusion events where vesicles from the same organelle fuse (homotypic fusion). In Arabidopsis thaliana (Mouse-ear cress), this protein is Cell division control protein 48 homolog A (CDC48A).